The following is a 172-amino-acid chain: RNA silencing suppressor p19 (172 aa).

Positions 1–20 (MERAIQGNDAREQANSERWD) are enriched in basic and acidic residues. The disordered stretch occupies residues 1-38 (MERAIQGNDAREQANSERWDGGSGSSTSPFQLPDESPS).

It belongs to the tombusvirus protein p19 family. In terms of assembly, homodimer.

Its function is as follows. Viral suppressor of RNA silencing which binds specifically to silencing RNAs (siRNAs). Acts as a molecular caliper to specifically select siRNAs based on the length of the duplex region of the RNA. This is RNA silencing suppressor p19 from Tomato bushy stunt virus (strain type) (TBSV).